A 671-amino-acid polypeptide reads, in one-letter code: Peroxisomal membrane protein PEX17 (671 aa).

A run of 8 helical transmembrane segments spans residues 127–147, 187–207, 212–232, 258–278, 318–338, 372–392, 475–495, and 504–524; these read LPLLAGLILADYDISADGPTL, VPVLACISIAQVYSLLGDVAI, FLQVGLDLIFSNYGLEMGTAL, VVALLNTFAHIASSCIVHVDI, YLKWELFTLCIIMQGIANMLL, FAAYDYVFFSAIDVLLSEYAP, LVEAAHSVILAGLAVPTNAVV, and MGGVLPLFPGVFSWNQFVLAI.

It localises to the peroxisome membrane. Functionally, involved in peroxisome biosynthesis. Required for the import of a subset of matrix proteins into peroxisomes. The polypeptide is Peroxisomal membrane protein PEX17 (PEX17) (Yarrowia lipolytica (strain CLIB 122 / E 150) (Yeast)).